Consider the following 143-residue polypeptide: Cytochrome c-type biogenesis protein CcmE (143 aa).

The Cytoplasmic segment spans residues 1–8; that stretch reads MNPVRRRK. A helical; Signal-anchor for type II membrane protein membrane pass occupies residues 9–29; that stretch reads LFILLFALTILSAAAALVLYA. At 30–143 the chain is on the periplasmic side; it reads LRQNISLFYT…KSALADKVKQ (114 aa). 2 residues coordinate heme: His-124 and Tyr-128.

It belongs to the CcmE/CycJ family.

The protein resides in the cell inner membrane. Heme chaperone required for the biogenesis of c-type cytochromes. Transiently binds heme delivered by CcmC and transfers the heme to apo-cytochromes in a process facilitated by CcmF and CcmH. The sequence is that of Cytochrome c-type biogenesis protein CcmE from Legionella pneumophila (strain Corby).